A 377-amino-acid chain; its full sequence is TraB domain-containing protein (377 aa).

Position 1 is an N-acetylmethionine (M1). The segment at 1-34 (MEEPEEQPPHEADTEPVVTSGASEAVPRVLPGDP) is disordered. T65 is modified (phosphothreonine).

In Bos taurus (Bovine), this protein is TraB domain-containing protein (TRABD).